The following is a 105-amino-acid chain: DNA-directed RNA polymerase subunit omega (105 aa).

It belongs to the RNA polymerase subunit omega family. The RNAP catalytic core consists of 2 alpha, 1 beta, 1 beta' and 1 omega subunit. When a sigma factor is associated with the core the holoenzyme is formed, which can initiate transcription.

The enzyme catalyses RNA(n) + a ribonucleoside 5'-triphosphate = RNA(n+1) + diphosphate. Its function is as follows. Promotes RNA polymerase assembly. Latches the N- and C-terminal regions of the beta' subunit thereby facilitating its interaction with the beta and alpha subunits. This Streptococcus uberis (strain ATCC BAA-854 / 0140J) protein is DNA-directed RNA polymerase subunit omega.